A 328-amino-acid chain; its full sequence is uncharacterized protein (328 aa).

Positions 10–55 (KMGFGHAMLLKMGWKGKGLGVEEDGRTEIIVNKKKQDKVGVGASIS) constitute a G-patch domain. Positions 97–291 (EKITFKRTIK…KKSFSVSKTR (195 aa)) are disordered. Residues 101 to 110 (FKRTIKKNSK) are compositionally biased toward basic residues. Residues 116–126 (SDSDSDSDSES) are compositionally biased toward acidic residues. Composition is skewed to low complexity over residues 141–158 (DSDSSCSDSSSSSSSSSS) and 210–240 (SSSSSDDSCSSESDSSSSSSSSSSSSDSSSE). The segment covering 248–257 (KNKNKNKNKK) has biased composition (basic residues).

This is an uncharacterized protein from Dictyostelium discoideum (Social amoeba).